Here is a 272-residue protein sequence, read N- to C-terminus: Putative hydro-lyase RPB_3621 (272 aa).

This sequence belongs to the D-glutamate cyclase family.

This is Putative hydro-lyase RPB_3621 from Rhodopseudomonas palustris (strain HaA2).